A 297-amino-acid chain; its full sequence is N-acetylneuraminate lyase (297 aa).

The aceneuramate site is built by S47 and T48. Catalysis depends on Y137, which acts as the Proton donor. K165 functions as the Schiff-base intermediate with substrate in the catalytic mechanism. Residues T167, G189, D191, E192, and S208 each contribute to the aceneuramate site.

Belongs to the DapA family. NanA subfamily. As to quaternary structure, homotetramer.

It localises to the cytoplasm. It catalyses the reaction aceneuramate = aldehydo-N-acetyl-D-mannosamine + pyruvate. Its pathway is amino-sugar metabolism; N-acetylneuraminate degradation; D-fructose 6-phosphate from N-acetylneuraminate: step 1/5. Functionally, catalyzes the reversible aldol cleavage of N-acetylneuraminic acid (sialic acid; Neu5Ac) to form pyruvate and N-acetylmannosamine (ManNAc) via a Schiff base intermediate. The chain is N-acetylneuraminate lyase from Salmonella paratyphi A (strain AKU_12601).